The following is a 62-amino-acid chain: Photosystem II reaction center protein Z (62 aa).

2 consecutive transmembrane segments (helical) span residues 8-28 and 41-61; these read AVFA…VVFA and FSGT…NSLI.

It belongs to the PsbZ family. As to quaternary structure, PSII is composed of 1 copy each of membrane proteins PsbA, PsbB, PsbC, PsbD, PsbE, PsbF, PsbH, PsbI, PsbJ, PsbK, PsbL, PsbM, PsbT, PsbY, PsbZ, Psb30/Ycf12, at least 3 peripheral proteins of the oxygen-evolving complex and a large number of cofactors. It forms dimeric complexes.

Its subcellular location is the plastid. It localises to the chloroplast thylakoid membrane. Functionally, may control the interaction of photosystem II (PSII) cores with the light-harvesting antenna, regulates electron flow through the 2 photosystem reaction centers. PSII is a light-driven water plastoquinone oxidoreductase, using light energy to abstract electrons from H(2)O, generating a proton gradient subsequently used for ATP formation. The sequence is that of Photosystem II reaction center protein Z from Daucus carota (Wild carrot).